A 216-amino-acid chain; its full sequence is MNKVNFRILGLQKYQDIYYIMQKFITCLKKNNINEIWLLEHYPVFTQGNSDNFNKKYIFNIPVVKTDRGGHMTFHGPGQKIIYFLLNIKNLNIKISKLIFYLENIIISTLSYFKINSYSIKNSPGVYVDKKKICSIGLRIKDGYSLHGLALNVDMDLYPFSHIHPCGDKNIKMTQIRDLISNINLEKLNTQIINNCKKFLMMNNFEINFLNSIKIF.

The BPL/LPL catalytic domain maps to 30-204 (KNNINEIWLL…NCKKFLMMNN (175 aa)). Residues 68–75 (RGGHMTFH), 135–137 (SIG), and 148–150 (GLA) each bind substrate. Residue cysteine 166 is the Acyl-thioester intermediate of the active site.

Belongs to the LipB family.

The protein localises to the cytoplasm. It catalyses the reaction octanoyl-[ACP] + L-lysyl-[protein] = N(6)-octanoyl-L-lysyl-[protein] + holo-[ACP] + H(+). The protein operates within protein modification; protein lipoylation via endogenous pathway; protein N(6)-(lipoyl)lysine from octanoyl-[acyl-carrier-protein]: step 1/2. Functionally, catalyzes the transfer of endogenously produced octanoic acid from octanoyl-acyl-carrier-protein onto the lipoyl domains of lipoate-dependent enzymes. Lipoyl-ACP can also act as a substrate although octanoyl-ACP is likely to be the physiological substrate. This chain is Octanoyltransferase, found in Wigglesworthia glossinidia brevipalpis.